An 85-amino-acid polypeptide reads, in one-letter code: Probable oxaloacetate decarboxylase gamma chain (85 aa).

The chain crosses the membrane as a helical span at residues 11-33 (AAALMVTGMGVVFIFLTILIFLV).

Belongs to the OadG family. As to quaternary structure, heterotrimer of an alpha, a beta and a gamma subunit. Na(+) serves as cofactor.

The protein resides in the cell membrane. The enzyme catalyses oxaloacetate + 2 Na(+)(in) + H(+) = pyruvate + 2 Na(+)(out) + CO2. In terms of biological role, catalyzes the decarboxylation of oxaloacetate coupled to Na(+) translocation. The chain is Probable oxaloacetate decarboxylase gamma chain from Vibrio vulnificus (strain CMCP6).